The chain runs to 523 residues: Tryptamine 5-hydroxylase (523 aa).

Residues 5–25 (MASTMSLALLVLSAAYVLVAL) traverse the membrane as a helical segment. Cys453 is a heme binding site.

The protein belongs to the cytochrome P450 family. Requires heme as cofactor.

The protein localises to the endoplasmic reticulum membrane. It catalyses the reaction tryptamine + reduced [NADPH--hemoprotein reductase] + O2 = serotonin + oxidized [NADPH--hemoprotein reductase] + H2O + H(+). Involved in serotonin biosynthesis. Catalyzes the conversion of tryptamine to serotonin. Accumulation of serotonin may play a role in innate immunity. This chain is Tryptamine 5-hydroxylase, found in Oryza sativa subsp. japonica (Rice).